A 120-amino-acid polypeptide reads, in one-letter code: Putative cysteine proteinase inhibitor 11 (120 aa).

A signal peptide spans methionine 1 to alanine 24. The Secondary area of contact signature appears at glutamine 73–glycine 77.

This sequence belongs to the cystatin family. Phytocystatin subfamily.

The protein resides in the secreted. Functionally, specific inhibitor of cysteine proteinases. Probably involved in the regulation of endogenous processes and in defense against pests and pathogens. The polypeptide is Putative cysteine proteinase inhibitor 11 (Oryza sativa subsp. japonica (Rice)).